Here is a 540-residue protein sequence, read N- to C-terminus: Mitochondrial distribution and morphology protein 34 (540 aa).

The 208-residue stretch at 1 to 208 (MSFKFNSGTF…LPSVIFNMSQ (208 aa)) folds into the SMP-LTD domain. Disordered stretches follow at residues 26–51 (ALNP…KKPK) and 379–399 (RSKS…SGSL). Residues 35–44 (PESTSGQDGS) are compositionally biased toward polar residues.

This sequence belongs to the MDM34 family. In terms of assembly, component of the ER-mitochondria encounter structure (ERMES) or MDM complex, composed of MMM1, MDM10, MDM12 and MDM34.

It is found in the mitochondrion outer membrane. Its function is as follows. Component of the ERMES/MDM complex, which serves as a molecular tether to connect the endoplasmic reticulum (ER) and mitochondria. Components of this complex are involved in the control of mitochondrial shape and protein biogenesis, and function in nonvesicular lipid trafficking between the ER and mitochondria. MDM34 is required for the interaction of the ER-resident membrane protein MMM1 and the outer mitochondrial membrane-resident beta-barrel protein MDM10. The chain is Mitochondrial distribution and morphology protein 34 from Kluyveromyces lactis (strain ATCC 8585 / CBS 2359 / DSM 70799 / NBRC 1267 / NRRL Y-1140 / WM37) (Yeast).